Consider the following 365-residue polypeptide: tRNA-specific 2-thiouridylase MnmA (365 aa).

ATP contacts are provided by residues Ala-6–Ser-13 and Met-32. Cys-101 acts as the Nucleophile in catalysis. Cys-101 and Cys-199 are disulfide-bonded. Residue Gly-125 participates in ATP binding. The interval Lys-148–Gln-150 is interaction with tRNA. Cys-199 (cysteine persulfide intermediate) is an active-site residue.

Belongs to the MnmA/TRMU family.

The protein resides in the cytoplasm. The enzyme catalyses S-sulfanyl-L-cysteinyl-[protein] + uridine(34) in tRNA + AH2 + ATP = 2-thiouridine(34) in tRNA + L-cysteinyl-[protein] + A + AMP + diphosphate + H(+). In terms of biological role, catalyzes the 2-thiolation of uridine at the wobble position (U34) of tRNA, leading to the formation of s(2)U34. The polypeptide is tRNA-specific 2-thiouridylase MnmA (Kineococcus radiotolerans (strain ATCC BAA-149 / DSM 14245 / SRS30216)).